Here is a 398-residue protein sequence, read N- to C-terminus: O-methyltransferase mpaG' (398 aa).

Serine 144 serves as a coordination point for (4E,8E)-10-(4,6-dihydroxy-7-methyl-3-oxo-1,3-dihydro-2-benzofuran-5-yl)-4,8-dimethyldeca-4,8-dienoate. Serine 144 provides a ligand contact to 4-farnesyl-3,5-dihydroxy-6-methylphthalide. Serine 144 is a binding site for 6-O-desmethylmycophenolate. Asparagine 197 lines the S-adenosyl-L-homocysteine pocket. (4E,8E)-10-(4,6-dihydroxy-7-methyl-3-oxo-1,3-dihydro-2-benzofuran-5-yl)-4,8-dimethyldeca-4,8-dienoate is bound at residue tyrosine 199. Tyrosine 199 lines the 4-farnesyl-3,5-dihydroxy-6-methylphthalide pocket. Tyrosine 199 serves as a coordination point for 6-O-desmethylmycophenolate. S-adenosyl-L-homocysteine contacts are provided by tyrosine 203, aspartate 237, glycine 239, histidine 244, aspartate 245, aspartate 264, and arginine 265. An S-adenosyl-L-methionine-binding site is contributed by aspartate 264. (4E,8E)-10-(4,6-dihydroxy-7-methyl-3-oxo-1,3-dihydro-2-benzofuran-5-yl)-4,8-dimethyldeca-4,8-dienoate is bound by residues arginine 265 and glutamine 267. Arginine 265 provides a ligand contact to 6-O-desmethylmycophenolate. Positions 286, 287, and 302 each coordinate S-adenosyl-L-homocysteine. A (4E,8E)-10-(4,6-dihydroxy-7-methyl-3-oxo-1,3-dihydro-2-benzofuran-5-yl)-4,8-dimethyldeca-4,8-dienoate-binding site is contributed by serine 303. Serine 303 contacts 4-farnesyl-3,5-dihydroxy-6-methylphthalide. Position 303 (serine 303) interacts with 6-O-desmethylmycophenolate. The active-site Proton acceptor is histidine 306. Catalysis depends on residues glutamate 335 and glutamate 362.

Belongs to the class I-like SAM-binding methyltransferase superfamily. Cation-independent O-methyltransferase family. Homodimer.

It is found in the cytoplasm. The protein localises to the cytosol. The catalysed reaction is (4E,8E)-10-(4,6-dihydroxy-7-methyl-3-oxo-1,3-dihydro-2-benzofuran-5-yl)-4,8-dimethyldeca-4,8-dienoate + S-adenosyl-L-methionine = (4E,8E)-10-(4-hydroxy-6-methoxy-7-methyl-3-oxo-1,3-dihydro-2-benzofuran-5-yl)-4,8-dimethyldeca-4,8-dienoate + S-adenosyl-L-homocysteine + H(+). It carries out the reaction 4-farnesyl-3,5-dihydroxy-6-methylphthalide + S-adenosyl-L-methionine = 4-farnesyl-3,5-dihydroxy-6-methoxylphthalide + S-adenosyl-L-homocysteine + H(+). The enzyme catalyses 6-O-desmethylmycophenolate + S-adenosyl-L-methionine = mycophenolate + S-adenosyl-L-homocysteine + H(+). It participates in secondary metabolite biosynthesis; terpenoid biosynthesis. Its function is as follows. O-methyltransferase; part of the gene cluster that mediates the biosynthesis of mycophenolic acid (MPA), the first isolated antibiotic natural product in the world obtained from a culture of Penicillium brevicompactum in 1893. MpaG' catalyzes the 5-O-methylation of three precursors in MPA biosynthesis including demethylmycophenolic acid (DMMPA), 4-farnesyl-3,5-dihydroxy-6-methylphthalide (FDHMP), and an intermediate containing three fewer carbon atoms compared to FDHMP (FDHMP-3C) with different catalytic efficiencies. The first step of the pathway is the synthesis of 5-methylorsellinic acid (5MOA) by the cytosolic polyketide synthase mpaC. 5MOA is then converted to the phthalide compound 5,7-dihydroxy-4,6-dimethylphthalide (DHMP) by the endoplasmic reticulum-bound cytochrome P450 monooxygenase mpaDE. MpaDE first catalyzes hydroxylation of 5-MOA to 4,6-dihydroxy-2-(hydroxymethyl)-3-methylbenzoic acid (DHMB). MpaDE then acts as a lactone synthase that catalyzes the ring closure to convert DHMB into DHMP. The next step is the prenylation of DHMP by the Golgi apparatus-associated prenyltransferase mpaA to yield farnesyl-DHMP (FDHMP). The ER-bound oxygenase mpaB then mediates the oxidative cleavage the C19-C20 double bond in FDHMP to yield FDHMP-3C via a mycophenolic aldehyde intermediate. The O-methyltransferase mpaG catalyzes the methylation of FDHMP-3C to yield MFDHMP-3C. MpaG and mpaB can also switch the order in which they act and, in this case, the conversion of FDHMP to MFDHMP-3C can take place via 5-O-methyl-FDHMP (MFDHMP). After the cytosolic methylation of FDHMP-3C, MFDHMP-3C enters into peroxisomes probably via free diffusion due to its low molecular weight. Upon a peroxisomal CoA ligation reaction, catalyzed by a beta-oxidation component enzyme acyl-CoA ligase ACL891, MFDHMP-3C-CoA would then be restricted to peroxisomes for the following beta-oxidation pathway steps. The peroxisomal beta-oxidation machinery than converts MFDHMP-3C-CoA into MPA_CoA, via a beta-oxidation chain-shortening process. Finally mpaH acts as a peroxisomal acyl-CoA hydrolase with high substrate specificity toward MPA-CoA to release the final product MPA. MpaH can also hydrolyze DMMPA-CoA to release demethylmycophenolic acid (DMMPA) that is further converted to MPA by mpaG. This Penicillium brevicompactum protein is O-methyltransferase mpaG'.